The following is a 194-amino-acid chain: Aminodeoxychorismate/anthranilate synthase component 2 (194 aa).

One can recognise a Glutamine amidotransferase type-1 domain in the interval 1 to 194 (MILMIDNYDS…IETYRKEVIA (194 aa)). Residues Cys-79, His-168, and Glu-170 contribute to the active site.

In terms of assembly, monomer. Heterodimer consisting of two non-identical subunits: a glutamine amidotransferase subunit (PabA) and a aminodeoxychorismate synthase subunit (PabB).

It catalyses the reaction chorismate + L-glutamine = anthranilate + pyruvate + L-glutamate + H(+). It carries out the reaction chorismate + L-glutamine = 4-amino-4-deoxychorismate + L-glutamate. Its pathway is amino-acid biosynthesis; L-tryptophan biosynthesis; L-tryptophan from chorismate: step 1/5. The protein operates within cofactor biosynthesis; tetrahydrofolate biosynthesis; 4-aminobenzoate from chorismate: step 1/2. In terms of biological role, part of a heterodimeric complex that catalyzes the two-step biosynthesis of 4-amino-4-deoxychorismate (ADC), a precursor of p-aminobenzoate (PABA) and tetrahydrofolate. In the first step, a glutamine amidotransferase (PabA) generates ammonia as a substrate that, along with chorismate, is used in the second step, catalyzed by aminodeoxychorismate synthase (PabB) to produce ADC. PabA converts glutamine into glutamate only in the presence of stoichiometric amounts of PabB. Also involved in the biosynthesis of anthranilate. Complements a glutamine amidotransferase-negative mutant. In Bacillus subtilis (strain 168), this protein is Aminodeoxychorismate/anthranilate synthase component 2.